Consider the following 254-residue polypeptide: D-aminoacyl-tRNA deacylase (254 aa).

The disordered stretch occupies residues 61-82 (KPTLTVHTPGNLTDDNSHGGNP). Over residues 65–74 (TVHTPGNLTD) the composition is skewed to polar residues.

This sequence belongs to the DtdA deacylase family. In terms of assembly, monomer. Requires Zn(2+) as cofactor.

The catalysed reaction is a D-aminoacyl-tRNA + H2O = a tRNA + a D-alpha-amino acid + H(+). It carries out the reaction glycyl-tRNA(Ala) + H2O = tRNA(Ala) + glycine + H(+). D-aminoacyl-tRNA deacylase with broad substrate specificity. By recycling D-aminoacyl-tRNA to D-amino acids and free tRNA molecules, this enzyme counteracts the toxicity associated with the formation of D-aminoacyl-tRNA entities in vivo. This is D-aminoacyl-tRNA deacylase from Methanococcus maripaludis (strain DSM 14266 / JCM 13030 / NBRC 101832 / S2 / LL).